Reading from the N-terminus, the 1199-residue chain is Major DNA-binding protein (1199 aa).

The interval 289-314 is disordered; the sequence is SGTTTARGARRNDVNSTSKPSPSGGF. Residues 497 to 510 fold into a zinc finger; sequence CSLCEKHTRPVCAH. 2 short sequence motifs (required for filament formation) span residues 841 to 842 and 1146 to 1148; these read FW and FNF. The required for nuclear localization stretch occupies residues 1172 to 1199; it reads LKRPPEDDELFDLSGIPIKHGNITMEMI.

Belongs to the herpesviridae major DNA-binding protein family. Homooligomers. Forms double-helical filaments necessary for the formation of replication compartments within the host nucleus. Interacts with the origin-binding protein. Interacts with the helicase primase complex; this interaction stimulates primer synthesis activity of the helicase-primase complex. Interacts with the DNA polymerase. Interacts with the alkaline exonuclease; this interaction increases its nuclease processivity.

The protein resides in the host nucleus. Functionally, plays several crucial roles in viral infection. Participates in the opening of the viral DNA origin to initiate replication by interacting with the origin-binding protein. May disrupt loops, hairpins and other secondary structures present on ssDNA to reduce and eliminate pausing of viral DNA polymerase at specific sites during elongation. Promotes viral DNA recombination by performing strand-transfer, characterized by the ability to transfer a DNA strand from a linear duplex to a complementary single-stranded DNA circle. Can also catalyze the renaturation of complementary single strands. Additionally, reorganizes the host cell nucleus, leading to the formation of prereplicative sites and replication compartments. This process is driven by the protein which can form double-helical filaments in the absence of DNA. This Varicella-zoster virus (strain Oka vaccine) (HHV-3) protein is Major DNA-binding protein.